The chain runs to 109 residues: Large ribosomal subunit protein uL22 (109 aa).

The protein belongs to the universal ribosomal protein uL22 family. Part of the 50S ribosomal subunit.

Functionally, this protein binds specifically to 23S rRNA; its binding is stimulated by other ribosomal proteins, e.g. L4, L17, and L20. It is important during the early stages of 50S assembly. It makes multiple contacts with different domains of the 23S rRNA in the assembled 50S subunit and ribosome. In terms of biological role, the globular domain of the protein is located near the polypeptide exit tunnel on the outside of the subunit, while an extended beta-hairpin is found that lines the wall of the exit tunnel in the center of the 70S ribosome. This is Large ribosomal subunit protein uL22 from Chromobacterium violaceum (strain ATCC 12472 / DSM 30191 / JCM 1249 / CCUG 213 / NBRC 12614 / NCIMB 9131 / NCTC 9757 / MK).